The sequence spans 171 residues: Ribosome maturation factor RimM (171 aa).

One can recognise a PRC barrel domain in the interval 97–170 (EGEYYYHEII…LVTIHVMEGL (74 aa)).

It belongs to the RimM family. In terms of assembly, binds ribosomal protein uS19.

Its subcellular location is the cytoplasm. In terms of biological role, an accessory protein needed during the final step in the assembly of 30S ribosomal subunit, possibly for assembly of the head region. Essential for efficient processing of 16S rRNA. May be needed both before and after RbfA during the maturation of 16S rRNA. It has affinity for free ribosomal 30S subunits but not for 70S ribosomes. The sequence is that of Ribosome maturation factor RimM from Bacillus thuringiensis (strain Al Hakam).